A 217-amino-acid chain; its full sequence is UPF0319 protein HSM_0266 (217 aa).

A signal peptide spans 1 to 21 (MKFSFAALASAMLLTSTAAFA).

This sequence belongs to the UPF0319 family.

This is UPF0319 protein HSM_0266 from Histophilus somni (strain 2336) (Haemophilus somnus).